A 341-amino-acid chain; its full sequence is Ribonucleoside-diphosphate reductase subunit beta (341 aa).

Fe cation-binding residues include Asp89, Glu120, and His123. Tyr127 is a catalytic residue. Fe cation-binding residues include Glu185, Glu219, and His222.

It belongs to the ribonucleoside diphosphate reductase small chain family. Tetramer of two alpha and two beta subunits. Requires Fe cation as cofactor.

It catalyses the reaction a 2'-deoxyribonucleoside 5'-diphosphate + [thioredoxin]-disulfide + H2O = a ribonucleoside 5'-diphosphate + [thioredoxin]-dithiol. Its function is as follows. Provides the precursors necessary for DNA synthesis. Catalyzes the biosynthesis of deoxyribonucleotides from the corresponding ribonucleotides. This chain is Ribonucleoside-diphosphate reductase subunit beta (nrdB), found in Helicobacter pylori (strain J99 / ATCC 700824) (Campylobacter pylori J99).